Consider the following 179-residue polypeptide: MSGNNVQEEDSTFHVSNLYSETEIKKITQDFISEKIREQNFEEIVKYSNIRIFLSLVLIVIGTYCSIFVQYKKNPVIMIQLLVAFFVVSTTLIIFEYFFFDDVFMILRSNNGSLVKLYCRLDVKKSTLILAYKLNKNVFETSFELKRLYNENGYLMKPYAKNVVMNFLSAHGRTLKLKN.

At 1–48 the chain is on the cytoplasmic side; it reads MSGNNVQEEDSTFHVSNLYSETEIKKITQDFISEKIREQNFEEIVKYS. The chain crosses the membrane as a helical span at residues 49–69; it reads NIRIFLSLVLIVIGTYCSIFV. The Extracellular segment spans residues 70–74; it reads QYKKN. The chain crosses the membrane as a helical span at residues 75 to 95; it reads PVIMIQLLVAFFVVSTTLIIF. Residues 96-179 lie on the Cytoplasmic side of the membrane; the sequence is EYFFFDDVFM…AHGRTLKLKN (84 aa).

The protein belongs to the SPCS2 family. Component of the signal peptidase complex (SPC) composed of a catalytic subunit SEC11/SPC21 and three accessory subunits SPC25, SPC3/SPC22, SPC1/SPC12. The complex induces a local thinning of the ER membrane which is used to measure the length of the signal peptide (SP) h-region of protein substrates. This ensures the selectivity of the complex towards h-regions shorter than 18-20 amino acids. Within the complex, interacts with SEC11/SPC21. Component of a complex composed of SPC25 and PMV; the interaction is mediated via the transmembrane domains. The complex interacts with the SEC61 channel-forming translocon complex and is involved in the recognition and import of PEXEL motif-containing proteins into the ER for subsequent export.

It localises to the endoplasmic reticulum membrane. Its function is as follows. Component of the signal peptidase complex (SPC) which catalyzes the cleavage of N-terminal signal sequences from nascent proteins as they are translocated into the lumen of the endoplasmic reticulum. Enhances the enzymatic activity of SPC and facilitates the interactions between different components of the translocation site. Also, regulatory component of the CSP25-plasmepsin PMV complex which cleaves the pentameric localization motif RxLxE/Q/D (termed Plasmodium export element (PEXEL)) located downstream of the N-terminal secretory signal sequence of several proteins. In Plasmodium falciparum (isolate 3D7), this protein is Signal peptidase complex subunit 2.